The sequence spans 613 residues: Dihydroxy-acid dehydratase (613 aa).

Asp81 lines the Mg(2+) pocket. Cys122 contacts [2Fe-2S] cluster. Mg(2+) is bound by residues Asp123 and Lys124. Lys124 bears the N6-carboxylysine mark. Position 195 (Cys195) interacts with [2Fe-2S] cluster. Glu491 contacts Mg(2+). Ser517 (proton acceptor) is an active-site residue.

Belongs to the IlvD/Edd family. In terms of assembly, homodimer. [2Fe-2S] cluster is required as a cofactor. Requires Mg(2+) as cofactor.

The enzyme catalyses (2R)-2,3-dihydroxy-3-methylbutanoate = 3-methyl-2-oxobutanoate + H2O. The catalysed reaction is (2R,3R)-2,3-dihydroxy-3-methylpentanoate = (S)-3-methyl-2-oxopentanoate + H2O. The protein operates within amino-acid biosynthesis; L-isoleucine biosynthesis; L-isoleucine from 2-oxobutanoate: step 3/4. It functions in the pathway amino-acid biosynthesis; L-valine biosynthesis; L-valine from pyruvate: step 3/4. Functions in the biosynthesis of branched-chain amino acids. Catalyzes the dehydration of (2R,3R)-2,3-dihydroxy-3-methylpentanoate (2,3-dihydroxy-3-methylvalerate) into 2-oxo-3-methylpentanoate (2-oxo-3-methylvalerate) and of (2R)-2,3-dihydroxy-3-methylbutanoate (2,3-dihydroxyisovalerate) into 2-oxo-3-methylbutanoate (2-oxoisovalerate), the penultimate precursor to L-isoleucine and L-valine, respectively. This Aeromonas salmonicida (strain A449) protein is Dihydroxy-acid dehydratase.